The sequence spans 280 residues: Phosphatidylglycerol--prolipoprotein diacylglyceryl transferase (280 aa).

Transmembrane regions (helical) follow at residues 30 to 50, 71 to 91, 106 to 126, and 132 to 152; these read WYGLAYVAGILLGWLYARRII, FLLWAAGGIVLGGRIGYILFY, IWNGGMSFHGGLLGTTLAIII, and AIPLWSLFDVVAAVVPIGLFF. R154 is an a 1,2-diacyl-sn-glycero-3-phospho-(1'-sn-glycerol) binding site. The next 3 membrane-spanning stretches (helical) occupy residues 188-208, 217-237, and 251-271; these read QLYEAALEGIVLLVVLAWFVY, GLVTGIFVCGYAASRIFVEFF, and WLTMGMVLSLPMALVGIWAIA.

The protein belongs to the Lgt family.

The protein resides in the cell inner membrane. The catalysed reaction is L-cysteinyl-[prolipoprotein] + a 1,2-diacyl-sn-glycero-3-phospho-(1'-sn-glycerol) = an S-1,2-diacyl-sn-glyceryl-L-cysteinyl-[prolipoprotein] + sn-glycerol 1-phosphate + H(+). It participates in protein modification; lipoprotein biosynthesis (diacylglyceryl transfer). Catalyzes the transfer of the diacylglyceryl group from phosphatidylglycerol to the sulfhydryl group of the N-terminal cysteine of a prolipoprotein, the first step in the formation of mature lipoproteins. The protein is Phosphatidylglycerol--prolipoprotein diacylglyceryl transferase of Rhizobium meliloti (strain 1021) (Ensifer meliloti).